We begin with the raw amino-acid sequence, 252 residues long: 5'-nucleotidase SurE (252 aa).

The a divalent metal cation site is built by Asp8, Asp9, Ser40, and Asn92.

It belongs to the SurE nucleotidase family. The cofactor is a divalent metal cation.

Its subcellular location is the cytoplasm. The catalysed reaction is a ribonucleoside 5'-phosphate + H2O = a ribonucleoside + phosphate. Its function is as follows. Nucleotidase that shows phosphatase activity on nucleoside 5'-monophosphates. This Mesorhizobium japonicum (strain LMG 29417 / CECT 9101 / MAFF 303099) (Mesorhizobium loti (strain MAFF 303099)) protein is 5'-nucleotidase SurE.